Consider the following 162-residue polypeptide: MSLGPLKFQAVGEKGEEDEEESLDSLKALTAKLQLQTRRPSYLEWTARVQSRAWYRAQARPEPVGPGAICGFDSMDSALEWLRRELQEMRAQDRQLAGQLLRLRARLHRLKVDQVCHLHQELLDEAELEMELESGTGLPLAPPLRHLGLTRMNISARRFTLC.

It belongs to the FAM167 (SEC) family.

This Mus musculus (Mouse) protein is Protein FAM167B (Fam167b).